We begin with the raw amino-acid sequence, 98 residues long: Co-chaperonin GroES (98 aa).

This sequence belongs to the GroES chaperonin family. In terms of assembly, heptamer of 7 subunits arranged in a ring. Interacts with the chaperonin GroEL.

The protein resides in the cytoplasm. In terms of biological role, together with the chaperonin GroEL, plays an essential role in assisting protein folding. The GroEL-GroES system forms a nano-cage that allows encapsulation of the non-native substrate proteins and provides a physical environment optimized to promote and accelerate protein folding. GroES binds to the apical surface of the GroEL ring, thereby capping the opening of the GroEL channel. In Bartonella tribocorum (strain CIP 105476 / IBS 506), this protein is Co-chaperonin GroES.